We begin with the raw amino-acid sequence, 705 residues long: Phosphoribosylformylglycinamidine synthase subunit PurL (705 aa).

H32 is an active-site residue. Y35 contributes to the ATP binding site. E76 contacts Mg(2+). Substrate is bound by residues 77 to 80 (SHNH) and R99. H78 (proton acceptor) is an active-site residue. A Mg(2+)-binding site is contributed by D100. Q224 is a binding site for substrate. Position 252 (D252) interacts with Mg(2+). Position 296–298 (296–298 (ESQ)) interacts with substrate. 2 residues coordinate ATP: D471 and G508. Mg(2+) is bound at residue N509. S511 contacts substrate.

This sequence belongs to the FGAMS family. As to quaternary structure, monomer. Part of the FGAM synthase complex composed of 1 PurL, 1 PurQ and 2 PurS subunits.

The protein localises to the cytoplasm. The catalysed reaction is N(2)-formyl-N(1)-(5-phospho-beta-D-ribosyl)glycinamide + L-glutamine + ATP + H2O = 2-formamido-N(1)-(5-O-phospho-beta-D-ribosyl)acetamidine + L-glutamate + ADP + phosphate + H(+). The protein operates within purine metabolism; IMP biosynthesis via de novo pathway; 5-amino-1-(5-phospho-D-ribosyl)imidazole from N(2)-formyl-N(1)-(5-phospho-D-ribosyl)glycinamide: step 1/2. Part of the phosphoribosylformylglycinamidine synthase complex involved in the purines biosynthetic pathway. Catalyzes the ATP-dependent conversion of formylglycinamide ribonucleotide (FGAR) and glutamine to yield formylglycinamidine ribonucleotide (FGAM) and glutamate. The FGAM synthase complex is composed of three subunits. PurQ produces an ammonia molecule by converting glutamine to glutamate. PurL transfers the ammonia molecule to FGAR to form FGAM in an ATP-dependent manner. PurS interacts with PurQ and PurL and is thought to assist in the transfer of the ammonia molecule from PurQ to PurL. In Pyrococcus abyssi (strain GE5 / Orsay), this protein is Phosphoribosylformylglycinamidine synthase subunit PurL.